Here is a 477-residue protein sequence, read N- to C-terminus: Secreted RxLR effector protein 102 (477 aa).

The first 20 residues, 1 to 20 (MRGGYYVLTALFVVASSEIA), serve as a signal peptide directing secretion. The short motif at 48-65 (RFLRESRGVHGNVANEER) is the RxLR-dEER element. Disordered stretches follow at residues 326–345 (SKGQ…TSKG), 351–370 (IKRS…LPSI), 376–401 (SSKS…KRSR), and 433–455 (PRSA…APSS).

Belongs to the RxLR effector family.

The protein localises to the secreted. It localises to the host nucleus. Secreted effector that acts as an elicitor that induces cell death in host plant cells. The polypeptide is Secreted RxLR effector protein 102 (Plasmopara viticola (Downy mildew of grapevine)).